Reading from the N-terminus, the 221-residue chain is Casparian strip membrane protein 2 (221 aa).

The interval 1–21 is disordered; that stretch reads MEKSEATTIEIGETSRESKGK. At 1–41 the chain is on the cytoplasmic side; that stretch reads MEKSEATTIEIGETSRESKGKTPLLAEVEQTARTAGSYRRG. A helical membrane pass occupies residues 42–62; the sequence is VAIFDLILRVSAATSALAATI. Residues 63–89 are Extracellular-facing; sequence TMGTTEQTLPFFTQFFQFQASYDDLPA. A helical membrane pass occupies residues 90–110; the sequence is FTFFVIALSIVTGYLVLSVPF. The Cytoplasmic segment spans residues 111–131; it reads SVVCIAQPLAAVPRLLLIVCD. A helical transmembrane segment spans residues 132–152; the sequence is TLTVTLATAAASSSAAIVYLA. The Extracellular segment spans residues 153 to 221; sequence HNGNADANWL…HYWDRRWCEI (69 aa).

Belongs to the Casparian strip membrane proteins (CASP) family. As to quaternary structure, homodimer and heterodimers.

The protein resides in the cell membrane. Functionally, regulates membrane-cell wall junctions and localized cell wall deposition. Required for establishment of the Casparian strip membrane domain (CSD) and the subsequent formation of Casparian strips, a cell wall modification of the root endodermis that determines an apoplastic barrier between the intraorganismal apoplasm and the extraorganismal apoplasm and prevents lateral diffusion. The sequence is that of Casparian strip membrane protein 2 from Erythranthe guttata (Yellow monkey flower).